Here is a 478-residue protein sequence, read N- to C-terminus: MPVDINRLTDGWLELESDPGLFTLLLEDFGVKGVQVEEIYDLQKNIEGPVYGFIFLFRWIEERRARRKIVETTEIYVKDEEAVNNIFFAQQVVPNSCATHALLSVLLNCSDIDLGNTLSRLKVHTKGMCPENKGWAIGNTPELACAHNSHAMPQARRRMDRNSGVSTGRFTGEAFHFVSFVPINGHLFELDGLKPFPMDHGPWGEKEAWTDKFRRVMSDRLGISTGEQDIRFNLMAVVPDRRIAITHKLKMLRTNQTIVSAALEKLLKSKRTESRSLETVDKIKKEEESPVKLSSEYSQLLEMNEKDDSSVPMSKELESLVSLNSSSDSVEIIGETEIKKENPPPSPPPSFIGAGTFSPKDLLSLLKNLESEINITEQHLCDENEKRAMFKVDDCRRTHNYDEFICTFLSMLAHQGELGDLVSQHLITNRKPNMGSVQNSGSRGVVRNYNKKTTTNGSSPKTPSSKRRRGRTKYRKRK.

The UCH catalytic domain maps to 11–239 (GWLELESDPG…IRFNLMAVVP (229 aa)). Cys97 functions as the Nucleophile in the catalytic mechanism. His176 (proton donor) is an active-site residue. Residues 400–428 (NYDEFICTFLSMLAHQGELGDLVSQHLIT) form the ULD domain. The segment at 430–478 (RKPNMGSVQNSGSRGVVRNYNKKTTTNGSSPKTPSSKRRRGRTKYRKRK) is positively charged C-terminal tail required for binding nucleosomes. Polar residues predominate over residues 432 to 442 (PNMGSVQNSGS). Positions 432–478 (PNMGSVQNSGSRGVVRNYNKKTTTNGSSPKTPSSKRRRGRTKYRKRK) are disordered. Over residues 464 to 478 (SSKRRRGRTKYRKRK) the composition is skewed to basic residues.

Belongs to the peptidase C12 family. BAP1 subfamily. In terms of assembly, catalytic component of the polycomb repressive deubiquitinase (PR-DUB) complex, at least composed of caly/calypso, Asx and sba (MBD5/6 homolog). The PR-DUB complex associates with nucleosomes to mediate deubiquitination of histone H2AK118ub1 substrates; the association requires the positively charged C-terminal tail of caly, probably due to direct binding of DNA. Interacts (via ULD domain) with Asx (via DEUBAD domain); the interaction produces a stable heterodimer with a composite binding site for ubiquitin. Homodimerizes (via coiled-coil hinge-region between the UCH and ULD domains) to mediate assembly of 2 copies of the caly-Asx heterodimer into a bisymmetric tetramer; dimerization enhances PR-DUB association with nucleosomes.

The protein resides in the nucleus. The catalysed reaction is Thiol-dependent hydrolysis of ester, thioester, amide, peptide and isopeptide bonds formed by the C-terminal Gly of ubiquitin (a 76-residue protein attached to proteins as an intracellular targeting signal).. Catalytic component of the polycomb repressive deubiquitinase (PR-DUB) complex, a complex that specifically mediates deubiquitination of histone H2A monoubiquitinated at 'Lys-119' (H2AK118ub1). Mediates bisymmetric organization of the PR-DUB complex and is involved in association with nucleosomes to mediate deubiquitination. Does not deubiquitinate monoubiquitinated histone H2B. Required to maintain the transcriptionally repressive state of homeotic genes throughout development. The PR-DUB complex has weak or no activity toward 'Lys-48'- and 'Lys-63'-linked polyubiquitin chains. Polycomb group (PcG) protein. This is Ubiquitin carboxyl-terminal hydrolase calypso from Aedes aegypti (Yellowfever mosquito).